The chain runs to 457 residues: Multidrug resistance protein MdtK (457 aa).

The next 12 membrane-spanning stretches (helical) occupy residues 11–31 (LLALAIPVVIAQLSQTAMGVV), 46–66 (AVAVGTSIWLPAILFGHGLLL), 93–113 (WLALCVSVLIMLVLYNSDHVI), 127–147 (AVGFLHAIMWGVPGYLFFQVL), 160–180 (GMVIGFVGLLVNIPINYIFIY), 188–208 (LGGVGCGVATASVYWVMFLMM), 243–263 (LPVALALFFEVTLFAVVALLV), 283–301 (LMFMLPMSLSVAATIRVGF), 316–336 (YTSMAVGLLLASVTAVFTIVF), 357–377 (LMLLAALYQLSDAVQVIGSGV), 387–407 (IFFITFTAYWLLGLPSGYLLG), and 418–438 (PAGFWIGFIIGLTAAAILMVL).

Belongs to the multi antimicrobial extrusion (MATE) (TC 2.A.66.1) family. MdtK subfamily.

It localises to the cell inner membrane. Its function is as follows. Multidrug efflux pump that functions probably as a Na(+)/drug antiporter. This is Multidrug resistance protein MdtK from Yersinia pseudotuberculosis serotype IB (strain PB1/+).